A 187-amino-acid chain; its full sequence is dCTP deaminase (187 aa).

DCTP-binding positions include lysine 110 to arginine 115, threonine 134 to glutamate 136, glutamine 155, tyrosine 169, and glutamine 179. The active-site Proton donor/acceptor is the glutamate 136.

Belongs to the dCTP deaminase family. Homotrimer.

It catalyses the reaction dCTP + H2O + H(+) = dUTP + NH4(+). Its pathway is pyrimidine metabolism; dUMP biosynthesis; dUMP from dCTP (dUTP route): step 1/2. Its function is as follows. Catalyzes the deamination of dCTP to dUTP. This chain is dCTP deaminase, found in Bordetella pertussis (strain Tohama I / ATCC BAA-589 / NCTC 13251).